Consider the following 319-residue polypeptide: 4-hydroxy-3-methylbut-2-enyl diphosphate reductase (319 aa).

Position 15 (Cys15) interacts with [4Fe-4S] cluster. Positions 44 and 77 each coordinate (2E)-4-hydroxy-3-methylbut-2-enyl diphosphate. Residues His44 and His77 each coordinate dimethylallyl diphosphate. The isopentenyl diphosphate site is built by His44 and His77. Cys99 contributes to the [4Fe-4S] cluster binding site. His127 is a binding site for (2E)-4-hydroxy-3-methylbut-2-enyl diphosphate. Residue His127 coordinates dimethylallyl diphosphate. His127 serves as a coordination point for isopentenyl diphosphate. Glu129 acts as the Proton donor in catalysis. Thr167 is a binding site for (2E)-4-hydroxy-3-methylbut-2-enyl diphosphate. [4Fe-4S] cluster is bound at residue Cys197. (2E)-4-hydroxy-3-methylbut-2-enyl diphosphate-binding residues include Ser225, Ser226, Asn227, and Ser269. Dimethylallyl diphosphate is bound by residues Ser225, Ser226, Asn227, and Ser269. 4 residues coordinate isopentenyl diphosphate: Ser225, Ser226, Asn227, and Ser269.

This sequence belongs to the IspH family. Requires [4Fe-4S] cluster as cofactor.

It catalyses the reaction isopentenyl diphosphate + 2 oxidized [2Fe-2S]-[ferredoxin] + H2O = (2E)-4-hydroxy-3-methylbut-2-enyl diphosphate + 2 reduced [2Fe-2S]-[ferredoxin] + 2 H(+). It carries out the reaction dimethylallyl diphosphate + 2 oxidized [2Fe-2S]-[ferredoxin] + H2O = (2E)-4-hydroxy-3-methylbut-2-enyl diphosphate + 2 reduced [2Fe-2S]-[ferredoxin] + 2 H(+). It functions in the pathway isoprenoid biosynthesis; dimethylallyl diphosphate biosynthesis; dimethylallyl diphosphate from (2E)-4-hydroxy-3-methylbutenyl diphosphate: step 1/1. Its pathway is isoprenoid biosynthesis; isopentenyl diphosphate biosynthesis via DXP pathway; isopentenyl diphosphate from 1-deoxy-D-xylulose 5-phosphate: step 6/6. In terms of biological role, catalyzes the conversion of 1-hydroxy-2-methyl-2-(E)-butenyl 4-diphosphate (HMBPP) into a mixture of isopentenyl diphosphate (IPP) and dimethylallyl diphosphate (DMAPP). Acts in the terminal step of the DOXP/MEP pathway for isoprenoid precursor biosynthesis. The protein is 4-hydroxy-3-methylbut-2-enyl diphosphate reductase of Rhodopirellula baltica (strain DSM 10527 / NCIMB 13988 / SH1).